The primary structure comprises 917 residues: Major intrinsically disordered Notch2-binding receptor 1 (917 aa).

Residues 1–892 (MEANQEASLF…AEFRRAKVCK (892 aa)) lie on the Cytoplasmic side of the membrane. Disordered stretches follow at residues 337-367 (STYFGPTPVMGTQDTRRCPGRPSKQTPWPAK), 389-410 (SEEKLRYPNSGNQTPNFSGPDR), 457-476 (DKSISCTSGQHSSDTSSVGT), 568-588 (ITNGVSGSKGDKCNRPENVHH), 652-679 (SEAPSDDSASPRVFHAHSGSHGPKLENS), 706-727 (TRPSSRSLTEENSATESKIASI), and 746-783 (NEEEIKDAGPANNKDWHRKSKEADRQYDIPPQHRLPKQ). A compositionally biased stretch (polar residues) spans 460–476 (ISCTSGQHSSDTSSVGT). The span at 576–588 (KGDKCNRPENVHH) shows a compositional bias: basic and acidic residues. Ser-712 carries the post-translational modification Phosphoserine. Residues 893 to 913 (IAALITAAACTVILVIVVPIC) traverse the membrane as a helical segment. Residues 914–917 (TMKS) are Extracellular-facing.

Belongs to the MINAR family. As to quaternary structure, interacts with NOTCH2; this interaction increases MINAR1 stability. Interacts (via N-terminus) with DEPTOR (via PDZ domain); this interaction may stabilize DEPTOR protein by impairing its ubiquitination.

The protein localises to the cell membrane. In terms of biological role, intrinsically disordered protein which may negatively regulate mTOR signaling pathway by stabilizing the mTOR complex component DEPTOR. Negatively regulates angiogenesis. Negatively regulates cell growth. Negatively regulates neurite outgrowth in hippocampal neurons. In Rattus norvegicus (Rat), this protein is Major intrinsically disordered Notch2-binding receptor 1 (Minar1).